Reading from the N-terminus, the 369-residue chain is Anhydro-N-acetylmuramic acid kinase (369 aa).

Position 12 to 19 (12 to 19 (GTSLDGVD)) interacts with ATP.

It belongs to the anhydro-N-acetylmuramic acid kinase family.

The catalysed reaction is 1,6-anhydro-N-acetyl-beta-muramate + ATP + H2O = N-acetyl-D-muramate 6-phosphate + ADP + H(+). The protein operates within amino-sugar metabolism; 1,6-anhydro-N-acetylmuramate degradation. It participates in cell wall biogenesis; peptidoglycan recycling. Catalyzes the specific phosphorylation of 1,6-anhydro-N-acetylmuramic acid (anhMurNAc) with the simultaneous cleavage of the 1,6-anhydro ring, generating MurNAc-6-P. Is required for the utilization of anhMurNAc either imported from the medium or derived from its own cell wall murein, and thus plays a role in cell wall recycling. The protein is Anhydro-N-acetylmuramic acid kinase of Actinobacillus pleuropneumoniae serotype 7 (strain AP76).